We begin with the raw amino-acid sequence, 356 residues long: Histidinol-phosphate aminotransferase (356 aa).

Residue lysine 214 is modified to N6-(pyridoxal phosphate)lysine.

Belongs to the class-II pyridoxal-phosphate-dependent aminotransferase family. Histidinol-phosphate aminotransferase subfamily. As to quaternary structure, homodimer. The cofactor is pyridoxal 5'-phosphate.

It carries out the reaction L-histidinol phosphate + 2-oxoglutarate = 3-(imidazol-4-yl)-2-oxopropyl phosphate + L-glutamate. The protein operates within amino-acid biosynthesis; L-histidine biosynthesis; L-histidine from 5-phospho-alpha-D-ribose 1-diphosphate: step 7/9. The protein is Histidinol-phosphate aminotransferase of Escherichia coli O81 (strain ED1a).